The sequence spans 91 residues: Non-specific lipid-transfer protein 1 (91 aa).

4 disulfide bridges follow: cysteine 4-cysteine 51, cysteine 14-cysteine 28, cysteine 29-cysteine 74, and cysteine 49-cysteine 88.

Detected in seeds (at protein level).

In terms of biological role, plant non-specific lipid-transfer proteins transfer phospholipids as well as galactolipids across membranes. May play a role in wax or cutin deposition in the cell walls of expanding epidermal cells and certain secretory tissues. In Trachyspermum ammi (Ajowan caraway), this protein is Non-specific lipid-transfer protein 1.